A 338-amino-acid chain; its full sequence is Heat-inducible transcription repressor HrcA (338 aa).

The protein belongs to the HrcA family.

Negative regulator of class I heat shock genes (grpE-dnaK-dnaJ and groELS operons). Prevents heat-shock induction of these operons. The sequence is that of Heat-inducible transcription repressor HrcA from Streptomyces albus G.